Reading from the N-terminus, the 472-residue chain is MAGGEAGVTLGQPHLSRQDLATLDVTKLTPLSHEVISRQATINIGTIGHVAHGKSTVVKAISGVHTVRFKNELERNITIKLGYANAKIYKLDDPSCPRPECYRSCGSSTPDEFPTDIPGTKGNFKLVRHVSFVDCPGHDILMATMLNGAAVMDAALLLIAGNESCPQPQTSEHLAAIEIMKLKHILILQNKIDLVKESQAKEQYDQILAFVQGTVAEGAPIIPISAQLKYNIEVVCEYIVKKIPVPPRDFTSEPRLIVIRSFDVNKPGCEVDDLKGGVAGGSILKGVLKVGQEIEVRPGIVSKDSEGKLMCKPIFSKIVSLFAEHNDLQYAAPGGLIGVGTKIDPTLCRADRMVGQVLGAVGALPEIFTELEISYFLLRRLLGVRTEGDKKAAKVQKLSKNEVLMVNIGSLSTGGRVSAVKADLGKIVLTNPVCTEVGEKIALSRRVEKHWRLIGWGQIRRGVTIKPTVDDD.

At Ala-2 the chain carries N-acetylalanine. Ser-16 is modified (phosphoserine). A tr-type G domain is found at 39–248 (QATINIGTIG…IVKKIPVPPR (210 aa)). The interval 48–55 (GHVAHGKS) is G1. 51–56 (AHGKST) contacts GTP. The tract at residues 76–80 (NITIK) is G2. A G3 region spans residues 134 to 137 (DCPG). Residues 190–193 (NKID) and 225–227 (SAQ) contribute to the GTP site. Positions 190 to 193 (NKID) are G4. The tract at residues 225 to 227 (SAQ) is G5. The segment at 457–469 (GQIRRGVTIKPTV) is interacts with CDC123.

The protein belongs to the TRAFAC class translation factor GTPase superfamily. Classic translation factor GTPase family. EIF2G subfamily. In terms of assembly, eukaryotic translation initiation factor 2 eIF2 is a heterotrimeric complex composed of an alpha (EIF2S1), a beta (EIF2S2) and a gamma (EIF2S3) chain. eIF2 is member of the 43S pre-initiation complex (43S PIC). Interacts (via C-terminus) with CDC123; the interaction is direct.

The protein localises to the cytoplasm. It is found in the cytosol. The enzyme catalyses GTP + H2O = GDP + phosphate + H(+). Functionally, member of the eIF2 complex that functions in the early steps of protein synthesis by forming a ternary complex with GTP and initiator tRNA. This complex binds to a 40S ribosomal subunit, followed by mRNA binding to form the 43S pre-initiation complex (43S PIC). Junction of the 60S ribosomal subunit to form the 80S initiation complex is preceded by hydrolysis of the GTP bound to eIF2 and release of an eIF2-GDP binary complex. In order for eIF2 to recycle and catalyze another round of initiation, the GDP bound to eIF2 must exchange with GTP by way of a reaction catalyzed by eIF-2B. This chain is Eukaryotic translation initiation factor 2 subunit 3 (EIF2S3), found in Sus scrofa (Pig).